We begin with the raw amino-acid sequence, 359 residues long: CMP-N-acetylneuraminate-poly-alpha-2,8-sialyltransferase (359 aa).

Residues 1-7 (MRSIRKR) lie on the Cytoplasmic side of the membrane. Residues 8-20 (WTICTISLLLIFY) form a helical; Signal-anchor for type II membrane protein membrane-spanning segment. At 21-359 (KTKEIARTEE…KLTTGKCVKQ (339 aa)) the chain is on the lumenal side. Residues Asn-50, Asn-74, and Asn-119 are each glycosylated (N-linked (GlcNAc...) asparagine). 2 disulfide bridges follow: Cys-142–Cys-292 and Cys-156–Cys-356. 2 residues coordinate CMP-N-acetyl-beta-neuraminate: Asn-147 and Asn-170. 2 N-linked (GlcNAc...) asparagine glycosylation sites follow: Asn-204 and Asn-219. Ser-279, Thr-280, Gly-281, and Trp-301 together coordinate CMP-N-acetyl-beta-neuraminate. His-331 (proton donor/acceptor) is an active-site residue.

It belongs to the glycosyltransferase 29 family. Autopolysialylated.

It is found in the golgi apparatus membrane. Its subcellular location is the secreted. The catalysed reaction is [N-acetyl-alpha-D-neuraminosyl-(2-&gt;8)](n) + CMP-N-acetyl-beta-neuraminate = [N-acetyl-alpha-D-neuraminosyl-(2-&gt;8)](n+1) + CMP + H(+). Catalyzes the transfer of a sialic acid from a CMP-linked sialic acid donor onto a terminal alpha-2,3-, alpha-2,6-, or alpha-2,8-linked sialic acid of an N-linked glycan protein acceptor through alpha-2,8-linkages. Therefore, participates in polysialic acid synthesis on various sialylated N-acetyllactosaminyl oligosaccharides, including NCAM1 N-glycans, FETUB N-glycans and AHSG. It is noteworthy that alpha-2,3-linked sialic acid is apparently a better acceptor than alpha-2,6-linked sialic acid. This Pan troglodytes (Chimpanzee) protein is CMP-N-acetylneuraminate-poly-alpha-2,8-sialyltransferase (ST8SIA4).